The chain runs to 726 residues: Germacradienol/geosmin synthase (726 aa).

The interval 2-354 (TQQPFQLPHF…TSAADVGALL (353 aa)) is germacradienol/germacrene D synthase. Mg(2+) contacts are provided by Asp86, Glu91, Asn267, Thr271, Gln276, Asp455, Asn598, Ser602, and Glu606. The short motif at 86–91 (DDHFLE) is the DDXXD motif 1; degenerate element. The segment at 355–726 (ADAVAQRARS…VPRSSPALTH (372 aa)) is geosmin synthase. Positions 455 to 459 (DDYYP) match the DDXXD motif 2; degenerate motif.

The protein belongs to the terpene synthase family. Requires Mg(2+) as cofactor.

It catalyses the reaction (2E,6E)-farnesyl diphosphate + H2O = (1E,4S,5E,7R)-germacra-1(10),5-dien-11-ol + diphosphate. The catalysed reaction is (1E,4S,5E,7R)-germacra-1(10),5-dien-11-ol + H2O = (-)-geosmin + acetone. The enzyme catalyses (2E,6E)-farnesyl diphosphate = (-)-germacrene D + diphosphate. It participates in secondary metabolite biosynthesis; geosmin biosynthesis. It functions in the pathway sesquiterpene biosynthesis; germacradienol biosynthesis; germacradienol from farnesyl diphosphate: step 1/1. The protein operates within sesquiterpene biosynthesis; germacrene D biosynthesis; germacrene D from farnesyl diphosphate: step 1/1. Tow-domain protein where the N-terminal domain catalyzes the cyclization of farnesyl diphosphate (FPP) to a 85:15 mixture of the sesquiterpene alcohol germacradienol and the sesquiterpene hydrocarbon germacrene D. The C-terminal domain partially converts the germacradienol formed into geosmin, the characteristic odoriferous ('earthy aroma') constituent of Streptomyces species. The chain is Germacradienol/geosmin synthase (cyc2) from Streptomyces coelicolor (strain ATCC BAA-471 / A3(2) / M145).